The following is a 235-amino-acid chain: Ion-translocating oxidoreductase complex subunit E (235 aa).

5 consecutive transmembrane segments (helical) span residues 63–83 (LGLS…ISLF), 93–113 (IPIY…LMNA), 117–137 (TLYQ…IIIG), 152–172 (IWDG…LGAL), and 206–226 (SFLL…LLAI).

This sequence belongs to the NqrDE/RnfAE family. In terms of assembly, the complex is composed of six subunits: RnfA, RnfB, RnfC, RnfD, RnfE and RnfG.

The protein resides in the cell inner membrane. Its function is as follows. Part of a membrane-bound complex that couples electron transfer with translocation of ions across the membrane. The polypeptide is Ion-translocating oxidoreductase complex subunit E (Haemophilus influenzae (strain PittEE)).